The chain runs to 452 residues: uncharacterized protein (452 aa).

This sequence belongs to the HypE family.

This is an uncharacterized protein from Methanocaldococcus jannaschii (strain ATCC 43067 / DSM 2661 / JAL-1 / JCM 10045 / NBRC 100440) (Methanococcus jannaschii).